Consider the following 163-residue polypeptide: Protein MATERNALLY EXPRESSED GENE 5 (163 aa).

The 80-residue stretch at 38–117 (STLYIEGLPA…DDVNVSAPAE (80 aa)) folds into the RRM domain. Cystine bridges form between Cys140–Cys162 and Cys143–Cys151.

Belongs to the MEG family. As to expression, ubiquitous.

In Zea mays (Maize), this protein is Protein MATERNALLY EXPRESSED GENE 5 (MEG5).